Here is a 158-residue protein sequence, read N- to C-terminus: NADPH-dependent 7-cyano-7-deazaguanine reductase (158 aa).

Cys-56 functions as the Thioimide intermediate in the catalytic mechanism. The active-site Proton donor is Asp-63. Residues 78 to 80 (LES) and 97 to 98 (HE) contribute to the substrate site.

The protein belongs to the GTP cyclohydrolase I family. QueF type 1 subfamily.

It is found in the cytoplasm. The catalysed reaction is 7-aminomethyl-7-carbaguanine + 2 NADP(+) = 7-cyano-7-deazaguanine + 2 NADPH + 3 H(+). The protein operates within tRNA modification; tRNA-queuosine biosynthesis. Its function is as follows. Catalyzes the NADPH-dependent reduction of 7-cyano-7-deazaguanine (preQ0) to 7-aminomethyl-7-deazaguanine (preQ1). The polypeptide is NADPH-dependent 7-cyano-7-deazaguanine reductase (Nitrobacter winogradskyi (strain ATCC 25391 / DSM 10237 / CIP 104748 / NCIMB 11846 / Nb-255)).